The primary structure comprises 693 residues: Polyribonucleotide nucleotidyltransferase (693 aa).

Positions 489 and 495 each coordinate Mg(2+). In terms of domain architecture, KH spans 556-615 (PQIHVMNINPAKIKDVVGRGGATVKGIVEKTGAQIDTSDSGEVKVFAKDKKSMDMAVAMI). Positions 625–693 (GQVYKGKIVK…GRVKLSLVAR (69 aa)) constitute an S1 motif domain.

Belongs to the polyribonucleotide nucleotidyltransferase family. As to quaternary structure, component of the RNA degradosome, which is a multiprotein complex involved in RNA processing and mRNA degradation. Mg(2+) is required as a cofactor.

It localises to the cytoplasm. The enzyme catalyses RNA(n+1) + phosphate = RNA(n) + a ribonucleoside 5'-diphosphate. In terms of biological role, involved in mRNA degradation. Catalyzes the phosphorolysis of single-stranded polyribonucleotides processively in the 3'- to 5'-direction. In Francisella tularensis subsp. mediasiatica (strain FSC147), this protein is Polyribonucleotide nucleotidyltransferase.